Here is a 433-residue protein sequence, read N- to C-terminus: GTPase Obg (433 aa).

Positions 1–159 constitute an Obg domain; sequence MKFVDSADLI…FEIRAELKVL (159 aa). One can recognise an OBG-type G domain in the interval 160-332; sequence ADVGFVGLPN…LLFMIYEELK (173 aa). Residues 166-173, 191-195, 213-216, 284-287, and 313-315 contribute to the GTP site; these read GLPNAGKS, FTTIN, DLPG, NKMD, and SGL. 2 residues coordinate Mg(2+): Ser173 and Thr193. In terms of domain architecture, OCT spans 355–433; that stretch reads KFEEQKEDIQ…VFDYELEWTD (79 aa).

It belongs to the TRAFAC class OBG-HflX-like GTPase superfamily. OBG GTPase family. In terms of assembly, monomer. It depends on Mg(2+) as a cofactor.

The protein localises to the cytoplasm. In terms of biological role, an essential GTPase which binds GTP, GDP and possibly (p)ppGpp with moderate affinity, with high nucleotide exchange rates and a fairly low GTP hydrolysis rate. Plays a role in control of the cell cycle, stress response, ribosome biogenesis and in those bacteria that undergo differentiation, in morphogenesis control. The polypeptide is GTPase Obg (Mycoplasma capricolum subsp. capricolum (strain California kid / ATCC 27343 / NCTC 10154)).